The chain runs to 425 residues: Nicotinate dehydrogenase large molybdopterin subunit (425 aa).

Se-Mo-molybdopterin cytosine dinucleotide-binding positions include glutamine 208 and 238–240; that span reads GFG.

Belongs to the xanthine dehydrogenase family. Heterooctamer of NDHM, NDHL, NDHS and NDHF. Dimer of heterotetramers. The cofactor is Se-Mo-molybdopterin cytosine dinucleotide.

The catalysed reaction is nicotinate + NADP(+) + H2O = 6-hydroxynicotinate + NADPH + H(+). The protein operates within cofactor degradation; nicotinate degradation; 6-hydroxynicotinate from nicotinate: step 1/1. With respect to regulation, reversibly inactivated by selenide and sulfide. Not inhibited by cyanide. Functionally, catalyzes the hydroxylation of nicotinate to 6-hydroxynicotinate. Also active against 2-pyrazinecarboxylic acid, but inactive against other nicotinate analogs. This chain is Nicotinate dehydrogenase large molybdopterin subunit (ndhL), found in Eubacterium barkeri (Clostridium barkeri).